The chain runs to 85 residues: Large ribosomal subunit protein bL27 (85 aa).

The tract at residues 1-20 (MAHKKAGGSTRNGRDSESKR) is disordered.

It belongs to the bacterial ribosomal protein bL27 family.

The chain is Large ribosomal subunit protein bL27 from Yersinia pseudotuberculosis serotype O:1b (strain IP 31758).